The primary structure comprises 130 residues: Small ribosomal subunit protein uS11 (130 aa).

The protein belongs to the universal ribosomal protein uS11 family. Part of the 30S ribosomal subunit. Interacts with proteins S7 and S18. Binds to IF-3.

Located on the platform of the 30S subunit, it bridges several disparate RNA helices of the 16S rRNA. Forms part of the Shine-Dalgarno cleft in the 70S ribosome. In Nautilia profundicola (strain ATCC BAA-1463 / DSM 18972 / AmH), this protein is Small ribosomal subunit protein uS11.